The chain runs to 400 residues: Phosphoglycerate kinase (400 aa).

Substrate contacts are provided by residues 23 to 25, R38, 61 to 64, R120, and R153; these read DLN and HFGR. Residues K203, E325, and 355–358 contribute to the ATP site; that span reads GGDT.

The protein belongs to the phosphoglycerate kinase family. Monomer.

Its subcellular location is the cytoplasm. The enzyme catalyses (2R)-3-phosphoglycerate + ATP = (2R)-3-phospho-glyceroyl phosphate + ADP. Its pathway is carbohydrate degradation; glycolysis; pyruvate from D-glyceraldehyde 3-phosphate: step 2/5. This is Phosphoglycerate kinase from Methylorubrum populi (strain ATCC BAA-705 / NCIMB 13946 / BJ001) (Methylobacterium populi).